The primary structure comprises 354 residues: Guanine nucleotide-binding protein G(t) subunit alpha-2 (354 aa).

Residues 1–28 (MGSGISAEDKELARRSKELEKKLQEDAD) are disordered. Gly2 carries N-myristoyl glycine lipidation. Positions 7-28 (AEDKELARRSKELEKKLQEDAD) are enriched in basic and acidic residues. Residues 32 to 354 (KTVKLLLLGA…KENLKDCGLF (323 aa)) enclose the G-alpha domain. The interval 35 to 48 (KLLLLGAGESGKST) is G1 motif. GTP-binding positions include 40 to 47 (GAGESGKS), 175 to 181 (LRSRVKT), 200 to 204 (DVGGQ), 269 to 272 (NKKD), and Ala326. Mg(2+) contacts are provided by Ser47 and Thr181. A G2 motif region spans residues 173-181 (DVLRSRVKT). A G3 motif region spans residues 196-205 (FRMFDVGGQR). A G4 motif region spans residues 265 to 272 (VLFLNKKD). Residues 324–329 (TCATDT) are G5 motif.

The protein belongs to the G-alpha family. G(i/o/t/z) subfamily. As to quaternary structure, g proteins are composed of 3 units; alpha, beta and gamma. The alpha chain contains the guanine nucleotide binding site. In the retina, expressed in the rod photoreceptors.

It localises to the cell projection. Its subcellular location is the cilium. The protein localises to the photoreceptor outer segment. The protein resides in the photoreceptor inner segment. In terms of biological role, guanine nucleotide-binding proteins (G proteins) are involved as modulators or transducers in various transmembrane signaling systems. Transducin is an amplifier and one of the transducers of a visual impulse that performs the coupling between rhodopsin and cGMP-phosphodiesterase. In Mus musculus (Mouse), this protein is Guanine nucleotide-binding protein G(t) subunit alpha-2 (Gnat2).